We begin with the raw amino-acid sequence, 160 residues long: Vesicle transport protein SFT2B (160 aa).

Residue methionine 1 is modified to N-acetylmethionine. Residues 1-36 (MDKLKKVLSGQDTEDRSGLSEVVEASSLSWSTRIKG) lie on the Cytoplasmic side of the membrane. Residue serine 9 is modified to Phosphoserine. Residues 37 to 57 (FIACFAIGILCSLLGTVLLWV) form a helical membrane-spanning segment. Residues 58 to 63 (PRKGLH) lie on the Lumenal side of the membrane. Residues 64 to 84 (LFAVFYTFGNIASIGSTIFLM) traverse the membrane as a helical segment. Topologically, residues 85-98 (GPVKQLKRMFEPTR) are cytoplasmic. Residues 99–119 (LIATIMVLLCFALTLCSAFWW) form a helical membrane-spanning segment. Topologically, residues 120–123 (HNKG) are lumenal. A helical membrane pass occupies residues 124 to 144 (LALIFCILQSLALTWYSLSFI). The Cytoplasmic segment spans residues 145 to 160 (PFARDAVKKCFAVCLA).

The protein belongs to the SFT2 family.

Its subcellular location is the membrane. In terms of biological role, may be involved in fusion of retrograde transport vesicles derived from an endocytic compartment with the Golgi complex. This chain is Vesicle transport protein SFT2B, found in Homo sapiens (Human).